Reading from the N-terminus, the 306-residue chain is Recombination-associated protein RdgC (306 aa).

It belongs to the RdgC family.

It is found in the cytoplasm. It localises to the nucleoid. Functionally, may be involved in recombination. This chain is Recombination-associated protein RdgC, found in Pseudomonas fluorescens (strain SBW25).